The primary structure comprises 671 residues: cGMP-dependent protein kinase 1 (671 aa).

Residue Ser2 is modified to N-acetylserine. Residues 2–59 (SELEEDFAKILMLKEERIKELEKRLSEKEEEIQELKRKLHKCQSVLPVPSTHIGPRTT) are a coiled coil. The interval 2 to 102 (SELEEDFAKI…LIKEAILDND (101 aa)) is required for dimerization. Positions 9–44 (AKILMLKEERIKELEKRLSEKEEEIQELKRKLHKCQ) are leucine-zipper. The segment at 50–75 (PSTHIGPRTTRAQGISAEPQTYRSFH) is autoinhibitory domain. Position 59 is a phosphothreonine; by autocatalysis (Thr59). The cGMP-binding, high affinity stretch occupies residues 103–220 (FMKNLELSQI…EYMEFLKSVP (118 aa)). 3',5'-cyclic AMP-binding positions include 167 to 170 (GELA) and 177 to 178 (RT). Residues 167 to 170 (GELA), 177 to 178 (RT), Arg282, 291 to 294 (GEKA), 301 to 302 (RT), and Tyr336 contribute to the 3',5'-cyclic GMP site. A cGMP-binding, low affinity region spans residues 221-341 (TFQSLPEEIL…SNKAYEDAEA (121 aa)). 3',5'-cyclic AMP is bound by residues 291–294 (GEKA), 301–302 (RT), and Tyr336. The Protein kinase domain occupies 360 to 619 (FNIIDTLGVG…VKDIQKHKWF (260 aa)). ATP contacts are provided by residues 366–374 (LGVGGFGRV) and Lys390. The active-site Proton acceptor is the Asp484. Thr515 is modified (phosphothreonine). One can recognise an AGC-kinase C-terminal domain in the interval 620 to 671 (EGFNWEGLRKGTLTPPIIPSVASPTDTSNFDSFPEDNDEPPPDDNSGWDIDF). The interval 635 to 671 (PIIPSVASPTDTSNFDSFPEDNDEPPPDDNSGWDIDF) is disordered. A compositionally biased stretch (acidic residues) spans 652–661 (FPEDNDEPPP).

It belongs to the protein kinase superfamily. AGC Ser/Thr protein kinase family. cGMP subfamily. As to quaternary structure, isoform alpha: parallel homodimer or heterodimer and also heterotetramer. Interacts directly with PPP1R12A. Non-covalent dimer of dimer of PRKG1-PRKG1 and PPP1R12A-PPP1R12A. This interaction targets PRKG1 to stress fibers to mediate smooth muscle cell relaxation and vasodilation in responses to rises in cGMP. Isoform beta: antiparallel homodimer. Part of cGMP kinase signaling complex at least composed of ACTA2/alpha-actin, CNN1/calponin H1, PLN/phospholamban, PRKG1 and ITPR1. Interacts with IRAG1. Forms a stable complex with ITPR1, IRAG1, and isoform beta of PRKG1. Interacts with TRPC7 (via ankyrin repeat domain). Isoform alpha interacts with RGS2. Interacts with GTF2I. Autophosphorylation increases kinase activity. Post-translationally, 65 kDa monomer is produced by proteolytic cleavage. Primarily expressed in lung and placenta.

It is found in the cytoplasm. The enzyme catalyses L-seryl-[protein] + ATP = O-phospho-L-seryl-[protein] + ADP + H(+). It carries out the reaction L-threonyl-[protein] + ATP = O-phospho-L-threonyl-[protein] + ADP + H(+). With respect to regulation, in the absence of cGMP, PRKG1 activity is suppressed by autoinhibitory contacts. In terms of biological role, serine/threonine protein kinase that acts as a key mediator of the nitric oxide (NO)/cGMP signaling pathway. GMP binding activates PRKG1, which phosphorylates serines and threonines on many cellular proteins. Numerous protein targets for PRKG1 phosphorylation are implicated in modulating cellular calcium, but the contribution of each of these targets may vary substantially among cell types. Proteins that are phosphorylated by PRKG1 regulate platelet activation and adhesion, smooth muscle contraction, cardiac function, gene expression, feedback of the NO-signaling pathway, and other processes involved in several aspects of the CNS like axon guidance, hippocampal and cerebellar learning, circadian rhythm and nociception. Smooth muscle relaxation is mediated through lowering of intracellular free calcium, by desensitization of contractile proteins to calcium, and by decrease in the contractile state of smooth muscle or in platelet activation. Regulates intracellular calcium levels via several pathways: phosphorylates IRAG1 and inhibits IP3-induced Ca(2+) release from intracellular stores, phosphorylation of KCNMA1 (BKCa) channels decreases intracellular Ca(2+) levels, which leads to increased opening of this channel. PRKG1 phosphorylates the canonical transient receptor potential channel (TRPC) family which inactivates the associated inward calcium current. Another mode of action of NO/cGMP/PKGI signaling involves PKGI-mediated inactivation of the Ras homolog gene family member A (RhoA). Phosphorylation of RHOA by PRKG1 blocks the action of this protein in myriad processes: regulation of RHOA translocation; decreasing contraction; controlling vesicle trafficking, reduction of myosin light chain phosphorylation resulting in vasorelaxation. Activation of PRKG1 by NO signaling also alters gene expression in a number of tissues. In smooth muscle cells, increased cGMP and PRKG1 activity influence expression of smooth muscle-specific contractile proteins, levels of proteins in the NO/cGMP signaling pathway, down-regulation of the matrix proteins osteopontin and thrombospondin-1 to limit smooth muscle cell migration and phenotype. Regulates vasodilator-stimulated phosphoprotein (VASP) functions in platelets and smooth muscle. This chain is cGMP-dependent protein kinase 1 (PRKG1), found in Homo sapiens (Human).